Here is a 323-residue protein sequence, read N- to C-terminus: Elongation factor P--(R)-beta-lysine ligase (323 aa).

76-78 (SPE) provides a ligand contact to substrate. Residues 100–102 (RNE) and Asn-109 contribute to the ATP site. Tyr-118 is a substrate binding site. 242-243 (EL) serves as a coordination point for ATP. Glu-249 contacts substrate. Residue Gly-298 participates in ATP binding.

It belongs to the class-II aminoacyl-tRNA synthetase family. EpmA subfamily. Homodimer.

It carries out the reaction D-beta-lysine + L-lysyl-[protein] + ATP = N(6)-((3R)-3,6-diaminohexanoyl)-L-lysyl-[protein] + AMP + diphosphate + H(+). In terms of biological role, with EpmB is involved in the beta-lysylation step of the post-translational modification of translation elongation factor P (EF-P). Catalyzes the ATP-dependent activation of (R)-beta-lysine produced by EpmB, forming a lysyl-adenylate, from which the beta-lysyl moiety is then transferred to the epsilon-amino group of a conserved specific lysine residue in EF-P. The protein is Elongation factor P--(R)-beta-lysine ligase of Pasteurella multocida (strain Pm70).